The sequence spans 376 residues: Probable ureide permease A3 (376 aa).

Topologically, residues 1-9 (HLVESKGGA) are extracellular. Residues 10–30 (IACMFLALFFLGTWPALLTML) traverse the membrane as a helical segment. Residues 31–41 (ERRGRLPQHTY) lie on the Cytoplasmic side of the membrane. A helical transmembrane segment spans residues 42-62 (LDYSITNFFAALLIAFTFGEI). Residues 63–80 (GKGKPDEPNFLAQLAQDN) are Extracellular-facing. Residues 81–101 (WPSVLFAMGGGVVLSLGNLSS) traverse the membrane as a helical segment. The Cytoplasmic segment spans residues 102 to 103 (QY). The helical transmembrane segment at 104 to 124 (AFAFVGLSVTEVITASITVVI) threads the bilayer. The Extracellular segment spans residues 125 to 137 (GTTLNYFLDDKIN). A helical transmembrane segment spans residues 138 to 158 (KAEILFPGVGCFLIAVFLGFC). At 159–231 (RFNSSNASDN…RAIKVFGKST (73 aa)) the chain is on the cytoplasmic side. Position 223–230 (223–230 (AIKVFGKS)) interacts with ATP. The helical transmembrane segment at 232–252 (LIGLALTFSAGLCFSMFSPAF) threads the bilayer. Topologically, residues 253 to 274 (NLATNDQWHTLPNGIPHLTVYT) are extracellular. The chain crosses the membrane as a helical span at residues 275 to 295 (AFFYFSISCFVIAIILNITFL). Topologically, residues 296–317 (YHPVLNLPKSSLKAYLADSDGR) are cytoplasmic. A helical membrane pass occupies residues 318–338 (IWALLAGLLCGFGNSLQFMGG). The Extracellular segment spans residues 339-376 (QAAGYQQQSLCRHFLCKHFWGVLLFGEYRRSSRKTYIC).

Belongs to the plant ureide permease (TC 2.A.7.19) family.

The protein resides in the membrane. In terms of biological role, transports a wide spectrum of oxo derivatives of heterocyclic nitrogen compounds. The sequence is that of Probable ureide permease A3 (A3) from Vigna unguiculata (Cowpea).